We begin with the raw amino-acid sequence, 587 residues long: Bifunctional lycopene cyclase/phytoene synthase (587 aa).

Residues 1-236 are lycopene beta-cyclase; that stretch reads MGLDYILVHV…IVFGLVCIDY (236 aa). 7 helical membrane-spanning segments follow: residues 5 to 25, 35 to 55, 65 to 85, 91 to 111, 116 to 136, 145 to 165, and 218 to 238; these read YILVHVTYNIPLAGILTLVYW, KISTLVIISLVATIPWDSYLV, NGVIGWTLYDIPSEEVFFFII, SLVYLILTRWLVLPMYLGTVA, LIGASILLLAISVGLIALCFG, IITWAGPFLLIQWVFSSGFII, and LFFLITNIVIVFGLVCIDYAI. Residues 243-587 form a phytoene synthase region; the sequence is CELVQSPQAV…VAYRAMAWRK (345 aa).

This sequence in the N-terminal section; belongs to the lycopene beta-cyclase family. In the C-terminal section; belongs to the phytoene/squalene synthase family.

The protein localises to the membrane. It catalyses the reaction all-trans-lycopene = gamma-carotene. The enzyme catalyses gamma-carotene = all-trans-beta-carotene. It carries out the reaction 2 (2E,6E,10E)-geranylgeranyl diphosphate = 15-cis-phytoene + 2 diphosphate. The protein operates within carotenoid biosynthesis; beta-carotene biosynthesis. It participates in carotenoid biosynthesis; phytoene biosynthesis; all-trans-phytoene from geranylgeranyl diphosphate: step 1/1. Bifunctional enzyme that catalyzes the reactions from geranylgeranyl diphosphate to phytoene (phytoene synthase) and lycopene to beta-carotene via the intermediate gamma-carotene (lycopene cyclase). This is Bifunctional lycopene cyclase/phytoene synthase from Aspergillus oryzae (strain ATCC 42149 / RIB 40) (Yellow koji mold).